Here is a 236-residue protein sequence, read N- to C-terminus: Phosphoribosylaminoimidazole-succinocarboxamide synthase (236 aa).

This sequence belongs to the SAICAR synthetase family.

The catalysed reaction is 5-amino-1-(5-phospho-D-ribosyl)imidazole-4-carboxylate + L-aspartate + ATP = (2S)-2-[5-amino-1-(5-phospho-beta-D-ribosyl)imidazole-4-carboxamido]succinate + ADP + phosphate + 2 H(+). It participates in purine metabolism; IMP biosynthesis via de novo pathway; 5-amino-1-(5-phospho-D-ribosyl)imidazole-4-carboxamide from 5-amino-1-(5-phospho-D-ribosyl)imidazole-4-carboxylate: step 1/2. This is Phosphoribosylaminoimidazole-succinocarboxamide synthase from Wolinella succinogenes (strain ATCC 29543 / DSM 1740 / CCUG 13145 / JCM 31913 / LMG 7466 / NCTC 11488 / FDC 602W) (Vibrio succinogenes).